A 90-amino-acid polypeptide reads, in one-letter code: Small ribosomal subunit protein uS15c (90 aa).

This sequence belongs to the universal ribosomal protein uS15 family. Part of the 30S ribosomal subunit.

Its subcellular location is the plastid. The protein resides in the chloroplast. This is Small ribosomal subunit protein uS15c (rps15) from Morus indica (Mulberry).